Consider the following 148-residue polypeptide: UPF0134 protein MPN_204 (148 aa).

It belongs to the UPF0134 family.

This Mycoplasma pneumoniae (strain ATCC 29342 / M129 / Subtype 1) (Mycoplasmoides pneumoniae) protein is UPF0134 protein MPN_204.